Here is a 609-residue protein sequence, read N- to C-terminus: Arginine--tRNA ligase (609 aa).

The 'HIGH' region motif lies at 132–142 (ANPTSSLHVGH).

The protein belongs to the class-I aminoacyl-tRNA synthetase family. In terms of assembly, monomer.

It is found in the cytoplasm. The catalysed reaction is tRNA(Arg) + L-arginine + ATP = L-arginyl-tRNA(Arg) + AMP + diphosphate. The polypeptide is Arginine--tRNA ligase (Psychrobacter sp. (strain PRwf-1)).